We begin with the raw amino-acid sequence, 519 residues long: Galactan beta-1,4-galactosyltransferase GALS2 (519 aa).

A helical transmembrane segment spans residues 28–48 (LALMALLVLCTLATLLPFLPS). The 215-residue stretch at 257–471 (DYLYCGSSLY…YHGSISQRRE (215 aa)) folds into the GT92 domain.

The protein belongs to the glycosyltransferase 92 family. Expressed in the midrib of mature leaves, root vasculature, flower filaments, siliques and seeds.

It is found in the golgi apparatus membrane. In terms of biological role, involved in the biosynthesis of beta-1,4-galactan. Beta-1,4-galactans are abundant polysaccharides in plant cell walls and are found as side-chain of rhamnogalacturonan I, which is a major component of pectin. This Arabidopsis thaliana (Mouse-ear cress) protein is Galactan beta-1,4-galactosyltransferase GALS2.